Reading from the N-terminus, the 517-residue chain is 2-isopropylmalate synthase (517 aa).

Residues 5–267 (VIIFDTTLRD…HTNVRCQEIY (263 aa)) form the Pyruvate carboxyltransferase domain. 4 residues coordinate Mn(2+): D14, H202, H204, and N238. Residues 392–517 (RLKCFHVDSS…QRKYIKKNNN (126 aa)) form a regulatory domain region.

This sequence belongs to the alpha-IPM synthase/homocitrate synthase family. LeuA type 1 subfamily. In terms of assembly, homodimer. Mn(2+) is required as a cofactor.

It localises to the cytoplasm. It catalyses the reaction 3-methyl-2-oxobutanoate + acetyl-CoA + H2O = (2S)-2-isopropylmalate + CoA + H(+). The protein operates within amino-acid biosynthesis; L-leucine biosynthesis; L-leucine from 3-methyl-2-oxobutanoate: step 1/4. Its function is as follows. Catalyzes the condensation of the acetyl group of acetyl-CoA with 3-methyl-2-oxobutanoate (2-ketoisovalerate) to form 3-carboxy-3-hydroxy-4-methylpentanoate (2-isopropylmalate). The sequence is that of 2-isopropylmalate synthase from Blochmanniella pennsylvanica (strain BPEN).